A 206-amino-acid chain; its full sequence is 2-phospho-L-lactate guanylyltransferase (206 aa).

It belongs to the CofC family. In terms of assembly, homodimer.

The catalysed reaction is (2S)-2-phospholactate + GTP + H(+) = (2S)-lactyl-2-diphospho-5'-guanosine + diphosphate. It functions in the pathway cofactor biosynthesis; coenzyme F420 biosynthesis. Functionally, guanylyltransferase that catalyzes the activation of (2S)-2-phospholactate (2-PL) as (2S)-lactyl-2-diphospho-5'-guanosine, via the condensation of 2-PL with GTP. It is involved in the biosynthesis of coenzyme F420, a hydride carrier cofactor. The chain is 2-phospho-L-lactate guanylyltransferase from Haloferax volcanii (strain ATCC 29605 / DSM 3757 / JCM 8879 / NBRC 14742 / NCIMB 2012 / VKM B-1768 / DS2) (Halobacterium volcanii).